The primary structure comprises 78 residues: Putative membrane protein insertion efficiency factor (78 aa).

Belongs to the UPF0161 family.

Its subcellular location is the cell inner membrane. Its function is as follows. Could be involved in insertion of integral membrane proteins into the membrane. This chain is Putative membrane protein insertion efficiency factor, found in Roseobacter denitrificans (strain ATCC 33942 / OCh 114) (Erythrobacter sp. (strain OCh 114)).